We begin with the raw amino-acid sequence, 236 residues long: Phosphoribosylaminoimidazole-succinocarboxamide synthase (236 aa).

This sequence belongs to the SAICAR synthetase family.

It catalyses the reaction 5-amino-1-(5-phospho-D-ribosyl)imidazole-4-carboxylate + L-aspartate + ATP = (2S)-2-[5-amino-1-(5-phospho-beta-D-ribosyl)imidazole-4-carboxamido]succinate + ADP + phosphate + 2 H(+). It participates in purine metabolism; IMP biosynthesis via de novo pathway; 5-amino-1-(5-phospho-D-ribosyl)imidazole-4-carboxamide from 5-amino-1-(5-phospho-D-ribosyl)imidazole-4-carboxylate: step 1/2. This chain is Phosphoribosylaminoimidazole-succinocarboxamide synthase, found in Pseudomonas savastanoi pv. phaseolicola (strain 1448A / Race 6) (Pseudomonas syringae pv. phaseolicola (strain 1448A / Race 6)).